A 123-amino-acid chain; its full sequence is Small ribosomal subunit protein uS12 (123 aa).

Aspartate 89 bears the 3-methylthioaspartic acid mark.

This sequence belongs to the universal ribosomal protein uS12 family. Part of the 30S ribosomal subunit. Contacts proteins S8 and S17. May interact with IF1 in the 30S initiation complex.

Functionally, with S4 and S5 plays an important role in translational accuracy. In terms of biological role, interacts with and stabilizes bases of the 16S rRNA that are involved in tRNA selection in the A site and with the mRNA backbone. Located at the interface of the 30S and 50S subunits, it traverses the body of the 30S subunit contacting proteins on the other side and probably holding the rRNA structure together. The combined cluster of proteins S8, S12 and S17 appears to hold together the shoulder and platform of the 30S subunit. The chain is Small ribosomal subunit protein uS12 from Syntrophotalea carbinolica (strain DSM 2380 / NBRC 103641 / GraBd1) (Pelobacter carbinolicus).